The chain runs to 112 residues: UPF0145 protein Acid_4599 (112 aa).

It belongs to the UPF0145 family.

The polypeptide is UPF0145 protein Acid_4599 (Solibacter usitatus (strain Ellin6076)).